Reading from the N-terminus, the 339-residue chain is Enhancer of mRNA-decapping protein 1 (339 aa).

2 disordered regions span residues 1-240 (MMMH…PPRY) and 309-339 (FPVNAQPPAHVGSAPQGQKISFDDLLGSAKK). The span at 13-25 (SPGSENHSNPASR) shows a compositional bias: polar residues. 2 stretches are compositionally biased toward basic and acidic residues: residues 26–38 (EQSKPKKETERRL) and 91–100 (DNKEKNKKLL). The segment covering 111-131 (NFSFYSESNSNSNSNVSSNSN) has biased composition (low complexity). Positions 163-173 (RPDKNGKKGPV) are enriched in basic and acidic residues. Polar residues predominate over residues 196–212 (FQRTSPKQQANTINDEN). Over residues 213-237 (SSPSSSASSVSMSSPRPVAGAVAAP) the composition is skewed to low complexity.

It belongs to the EDC family.

The protein localises to the cytoplasm. Its function is as follows. mRNA-binding protein which stimulates mRNA decapping. In Scheffersomyces stipitis (strain ATCC 58785 / CBS 6054 / NBRC 10063 / NRRL Y-11545) (Yeast), this protein is Enhancer of mRNA-decapping protein 1 (EDC1).